Here is a 437-residue protein sequence, read N- to C-terminus: Enolase (437 aa).

Gln163 contacts (2R)-2-phosphoglycerate. Glu205 (proton donor) is an active-site residue. Positions 242, 285, and 312 each coordinate Mg(2+). (2R)-2-phosphoglycerate-binding residues include Lys337, Arg366, Ser367, and Lys388. Residue Lys337 is the Proton acceptor of the active site.

The protein belongs to the enolase family. It depends on Mg(2+) as a cofactor.

It is found in the cytoplasm. The protein localises to the secreted. It localises to the cell surface. The enzyme catalyses (2R)-2-phosphoglycerate = phosphoenolpyruvate + H2O. The protein operates within carbohydrate degradation; glycolysis; pyruvate from D-glyceraldehyde 3-phosphate: step 4/5. Functionally, catalyzes the reversible conversion of 2-phosphoglycerate (2-PG) into phosphoenolpyruvate (PEP). It is essential for the degradation of carbohydrates via glycolysis. This is Enolase from Nitratidesulfovibrio vulgaris (strain DP4) (Desulfovibrio vulgaris).